A 505-amino-acid polypeptide reads, in one-letter code: Transcription factor APG (505 aa).

Disordered stretches follow at residues 1-40, 61-99, 119-156, 169-242, 256-312, 324-344, and 469-505; these read MLRGNDTGSDLAELLWDNGAPAPLRPPPPPPFQPFTCSAA, GAANHHHHDDDDDDDDDVPWLHYHPVVDDDDDADADTAP, PAAAASRVDPDPCSSSHGAVVPSTSAAAAKQARTSGGG, PLQQ…APTT, AQRL…SQDE, RRSAARSSKRSRTAEVHNLSE, and PPPPPPPFPHAAATAVEQTPSPPGAADAGNAPAVKQA. Residues 23–33 are compositionally biased toward pro residues; it reads PLRPPPPPPFQ. Residues 131-144 are compositionally biased toward polar residues; it reads CSSSHGAVVPSTSA. The segment covering 174-199 has biased composition (low complexity); it reads PSGGETASASASAAATSTVPVESTVV. The span at 200 to 212 shows a compositional bias: polar residues; that stretch reads QAATNRLRSTPLF. The segment covering 222–239 has biased composition (pro residues); it reads PPKPSPRAAAPPPPPPLA. Basic and acidic residues predominate over residues 288 to 299; that stretch reads GDRRQLNWRDSH. Positions 300–310 are enriched in polar residues; sequence NNQSAEWSASQ. Positions 324–334 are enriched in basic residues; sequence RRSAARSSKRS. Residues 335-344 are compositionally biased toward basic and acidic residues; sequence RTAEVHNLSE. The bHLH domain occupies 335 to 384; that stretch reads RTAEVHNLSERRRRDRINEKMRALQELIPNCNKIDKASMLEEAIEYLKTL. Over residues 492-505 the composition is skewed to low complexity; it reads GAADAGNAPAVKQA.

Belongs to the bHLH protein family. Homodimer and heterodimer with ILI5 or ILI6.

It localises to the nucleus. Its function is as follows. Atypical bHLH transcription factor that acts as a negative regulator of grain size. Binds the transcription factor ILI6 and forms a heterodimer of antagonistic bHLH transcription factors that regulates grain length and weight by controlling cell elongation in lemma and palea. May be involved in the control of lamina inclination through brassinosteroid signaling pathway. The polypeptide is Transcription factor APG (APG) (Oryza sativa subsp. japonica (Rice)).